Here is a 237-residue protein sequence, read N- to C-terminus: Flagellar L-ring protein (237 aa).

A signal peptide spans 1–16 (MIKRSAVVLMAVILTG). The N-palmitoyl cysteine moiety is linked to residue Cys17. Cys17 is lipidated: S-diacylglycerol cysteine. The tract at residues 122-143 (PPDSSGDMSTDSNSSSDGKGSV) is disordered. The span at 124-140 (DSSGDMSTDSNSSSDGK) shows a compositional bias: low complexity.

Belongs to the FlgH family. The basal body constitutes a major portion of the flagellar organelle and consists of four rings (L,P,S, and M) mounted on a central rod.

The protein localises to the cell outer membrane. Its subcellular location is the bacterial flagellum basal body. In terms of biological role, assembles around the rod to form the L-ring and probably protects the motor/basal body from shearing forces during rotation. The sequence is that of Flagellar L-ring protein from Allorhizobium ampelinum (strain ATCC BAA-846 / DSM 112012 / S4) (Agrobacterium vitis (strain S4)).